The following is a 98-amino-acid chain: Protein PROLINE CONTENT ALTERNATIVE 22 (98 aa).

Mainly expressed in flowers, to a lower extent, in roots and, at very low levels, in leaves and stems.

The protein localises to the cytoplasm. In terms of biological role, acts as an opponent to RZF1 during early seedling growth in term of proline accumulation in response to dehydration and abscisic acid (ABA). Confers sensitivity to abiotic stresses such as ABA, drought and osmotic stress (e.g. mannitol treatment) by preventing proline accumulation and by reducing the expression of dehydration-inducible genes. Promotes the production of lipid peroxidation by drought stress thus leading to malondialdehyde (MDA) synthesis. Prevents pollen tube elongation. Necessary for RZF1 expression in seedlings. This is Protein PROLINE CONTENT ALTERNATIVE 22 from Arabidopsis thaliana (Mouse-ear cress).